A 210-amino-acid polypeptide reads, in one-letter code: MVVAKVCGVRDAGAAAAAAAAGAGFVGMVCVPGRRRTVGREEARAIAAAVRGAPGTRLVGVFQDQAPEEVLRLQRELGLDAVQLHGAEDWAAFRAQLPASTLLIKSFVFPRDCEAALAMHRAARGRNCMVLFDAAGGGSGARLDWAALAAWGAAHADVQFMLAGGLTPANVAEAARLPGVVAVDVSSGVETGGAKDGNKIRQFVENAKGI.

The protein belongs to the TrpF family.

It carries out the reaction N-(5-phospho-beta-D-ribosyl)anthranilate = 1-(2-carboxyphenylamino)-1-deoxy-D-ribulose 5-phosphate. Its pathway is amino-acid biosynthesis; L-tryptophan biosynthesis; L-tryptophan from chorismate: step 3/5. The chain is N-(5'-phosphoribosyl)anthranilate isomerase (TRP1) from Eremothecium gossypii (strain ATCC 10895 / CBS 109.51 / FGSC 9923 / NRRL Y-1056) (Yeast).